A 264-amino-acid chain; its full sequence is Thymidylate synthase (264 aa).

DUMP contacts are provided by residues R21 and 126-127 (RR). The active-site Nucleophile is C146. DUMP contacts are provided by residues 166-169 (RSAD), N177, and 207-209 (HLY). (6R)-5,10-methylene-5,6,7,8-tetrahydrofolate is bound at residue D169. A263 is a (6R)-5,10-methylene-5,6,7,8-tetrahydrofolate binding site.

The protein belongs to the thymidylate synthase family. Bacterial-type ThyA subfamily. In terms of assembly, homodimer.

The protein localises to the cytoplasm. It catalyses the reaction dUMP + (6R)-5,10-methylene-5,6,7,8-tetrahydrofolate = 7,8-dihydrofolate + dTMP. The protein operates within pyrimidine metabolism; dTTP biosynthesis. Functionally, catalyzes the reductive methylation of 2'-deoxyuridine-5'-monophosphate (dUMP) to 2'-deoxythymidine-5'-monophosphate (dTMP) while utilizing 5,10-methylenetetrahydrofolate (mTHF) as the methyl donor and reductant in the reaction, yielding dihydrofolate (DHF) as a by-product. This enzymatic reaction provides an intracellular de novo source of dTMP, an essential precursor for DNA biosynthesis. The protein is Thymidylate synthase of Rhodopseudomonas palustris (strain ATCC BAA-98 / CGA009).